Consider the following 341-residue polypeptide: Anthranilate phosphoribosyltransferase (341 aa).

5-phospho-alpha-D-ribose 1-diphosphate-binding positions include G82, 85–86, T90, 92–95, 110–118, and S122; these read GD, NIST, and KHGGRSVSG. G82 is a binding site for anthranilate. Residue S94 participates in Mg(2+) binding. R168 is a binding site for anthranilate. Residues D227 and E228 each contribute to the Mg(2+) site.

It belongs to the anthranilate phosphoribosyltransferase family. As to quaternary structure, homodimer. Mg(2+) is required as a cofactor.

The catalysed reaction is N-(5-phospho-beta-D-ribosyl)anthranilate + diphosphate = 5-phospho-alpha-D-ribose 1-diphosphate + anthranilate. It participates in amino-acid biosynthesis; L-tryptophan biosynthesis; L-tryptophan from chorismate: step 2/5. Catalyzes the transfer of the phosphoribosyl group of 5-phosphorylribose-1-pyrophosphate (PRPP) to anthranilate to yield N-(5'-phosphoribosyl)-anthranilate (PRA). The chain is Anthranilate phosphoribosyltransferase from Nitrosomonas europaea (strain ATCC 19718 / CIP 103999 / KCTC 2705 / NBRC 14298).